The primary structure comprises 281 residues: Protein phosphatase 2C homolog 1 (281 aa).

One can recognise a PPM-type phosphatase domain in the interval 20–281 (RVGVAENKNS…DNVTVMVVFL (262 aa)). Residues Asp-58, Gly-59, Asp-233, and Asp-272 each contribute to the Mn(2+) site.

This sequence belongs to the PP2C family. As to quaternary structure, interacts with NBP2 and PBS2. The cofactor is Mg(2+). It depends on Mn(2+) as a cofactor.

The protein resides in the peroxisome. It carries out the reaction O-phospho-L-seryl-[protein] + H2O = L-seryl-[protein] + phosphate. The enzyme catalyses O-phospho-L-threonyl-[protein] + H2O = L-threonyl-[protein] + phosphate. Its function is as follows. Serine and threonine phosphatase. Involved in tRNA splicing and cell separation. This Saccharomyces cerevisiae (strain ATCC 204508 / S288c) (Baker's yeast) protein is Protein phosphatase 2C homolog 1 (PTC1).